The following is a 183-amino-acid chain: Ras-like protein (183 aa).

10 to 17 (GAGGVGKS) contacts GTP. Positions 32-40 (YDPTIEDSY) match the Effector region motif. Residues 57–61 (DTAGQ) and 116–119 (NKCD) each bind GTP.

It belongs to the small GTPase superfamily. Ras family.

The protein localises to the cell membrane. It catalyses the reaction GTP + H2O = GDP + phosphate + H(+). With respect to regulation, alternates between an inactive form bound to GDP and an active form bound to GTP. Activated by a guanine nucleotide-exchange factor (GEF) and inactivated by a GTPase-activating protein (GAP). Functionally, ras proteins bind GDP/GTP and possess intrinsic GTPase activity. The sequence is that of Ras-like protein from Carassius auratus (Goldfish).